We begin with the raw amino-acid sequence, 264 residues long: 3-methyl-2-oxobutanoate hydroxymethyltransferase (264 aa).

Mg(2+)-binding residues include D45 and D84. Residues 45–46, D84, and K112 each bind 3-methyl-2-oxobutanoate; that span reads DS. E114 serves as a coordination point for Mg(2+). E181 (proton acceptor) is an active-site residue.

Belongs to the PanB family. In terms of assembly, homodecamer; pentamer of dimers. It depends on Mg(2+) as a cofactor.

The protein localises to the cytoplasm. It catalyses the reaction 3-methyl-2-oxobutanoate + (6R)-5,10-methylene-5,6,7,8-tetrahydrofolate + H2O = 2-dehydropantoate + (6S)-5,6,7,8-tetrahydrofolate. Its pathway is cofactor biosynthesis; (R)-pantothenate biosynthesis; (R)-pantoate from 3-methyl-2-oxobutanoate: step 1/2. Catalyzes the reversible reaction in which hydroxymethyl group from 5,10-methylenetetrahydrofolate is transferred onto alpha-ketoisovalerate to form ketopantoate. The sequence is that of 3-methyl-2-oxobutanoate hydroxymethyltransferase from Photobacterium profundum (strain SS9).